Here is a 335-residue protein sequence, read N- to C-terminus: 5-dehydro-2-deoxygluconokinase (335 aa).

This sequence belongs to the carbohydrate kinase PfkB family.

It catalyses the reaction 5-dehydro-2-deoxy-D-gluconate + ATP = 6-phospho-5-dehydro-2-deoxy-D-gluconate + ADP + H(+). It functions in the pathway polyol metabolism; myo-inositol degradation into acetyl-CoA; acetyl-CoA from myo-inositol: step 5/7. Functionally, catalyzes the phosphorylation of 5-dehydro-2-deoxy-D-gluconate (2-deoxy-5-keto-D-gluconate or DKG) to 6-phospho-5-dehydro-2-deoxy-D-gluconate (DKGP). This Geobacillus kaustophilus (strain HTA426) protein is 5-dehydro-2-deoxygluconokinase.